Consider the following 372-residue polypeptide: Methylthioribose-1-phosphate isomerase 2 (372 aa).

The active-site Proton donor is the Asp-254.

The protein belongs to the eIF-2B alpha/beta/delta subunits family. MtnA subfamily.

It is found in the cytoplasm. The protein localises to the nucleus. The catalysed reaction is 5-(methylsulfanyl)-alpha-D-ribose 1-phosphate = 5-(methylsulfanyl)-D-ribulose 1-phosphate. The protein operates within amino-acid biosynthesis; L-methionine biosynthesis via salvage pathway; L-methionine from S-methyl-5-thio-alpha-D-ribose 1-phosphate: step 1/6. Functionally, catalyzes the interconversion of methylthioribose-1-phosphate (MTR-1-P) into methylthioribulose-1-phosphate (MTRu-1-P). This Trypanosoma cruzi (strain CL Brener) protein is Methylthioribose-1-phosphate isomerase 2.